Reading from the N-terminus, the 558-residue chain is 2-hydroxy-7-methoxy-5-methyl-1-naphthoate--CoA ligase (558 aa).

ATP contacts are provided by residues 212 to 213, 329 to 331, V351, D435, R450, and K542; these read GG and ASR.

The protein belongs to the ATP-dependent AMP-binding enzyme family.

It catalyses the reaction 2-hydroxy-7-methoxy-5-methyl-1-naphthoate + ATP + CoA = 2-hydroxy-7-methoxy-5-methyl-1-naphthoyl-CoA + AMP + diphosphate. Its pathway is antibiotic biosynthesis. Its function is as follows. Catalyzes the activation of 2-hydroxy-7-methoxy-5-methyl-1-naphthoate in the biosynthesis of the naphthoate moiety of the neocarzinostatin chromophore. Also catalyzes the activation of other 1-naphthoic acid analogs such as 2-hydroxy-5-methyl-1-naphthoate or 2,7-dihydroxy-5-methyl-1-naphthoate in vitro. In Streptomyces carzinostaticus, this protein is 2-hydroxy-7-methoxy-5-methyl-1-naphthoate--CoA ligase.